The following is a 180-amino-acid chain: ATP synthase subunit delta (180 aa).

This sequence belongs to the ATPase delta chain family. As to quaternary structure, F-type ATPases have 2 components, F(1) - the catalytic core - and F(0) - the membrane proton channel. F(1) has five subunits: alpha(3), beta(3), gamma(1), delta(1), epsilon(1). F(0) has three main subunits: a(1), b(2) and c(10-14). The alpha and beta chains form an alternating ring which encloses part of the gamma chain. F(1) is attached to F(0) by a central stalk formed by the gamma and epsilon chains, while a peripheral stalk is formed by the delta and b chains.

It localises to the cell membrane. Its function is as follows. F(1)F(0) ATP synthase produces ATP from ADP in the presence of a proton or sodium gradient. F-type ATPases consist of two structural domains, F(1) containing the extramembraneous catalytic core and F(0) containing the membrane proton channel, linked together by a central stalk and a peripheral stalk. During catalysis, ATP synthesis in the catalytic domain of F(1) is coupled via a rotary mechanism of the central stalk subunits to proton translocation. In terms of biological role, this protein is part of the stalk that links CF(0) to CF(1). It either transmits conformational changes from CF(0) to CF(1) or is implicated in proton conduction. This Latilactobacillus sakei subsp. sakei (strain 23K) (Lactobacillus sakei subsp. sakei) protein is ATP synthase subunit delta.